The following is a 360-amino-acid chain: Histidinol-phosphate aminotransferase (360 aa).

Residue Lys222 is modified to N6-(pyridoxal phosphate)lysine.

It belongs to the class-II pyridoxal-phosphate-dependent aminotransferase family. Histidinol-phosphate aminotransferase subfamily. Pyridoxal 5'-phosphate is required as a cofactor.

It carries out the reaction L-histidinol phosphate + 2-oxoglutarate = 3-(imidazol-4-yl)-2-oxopropyl phosphate + L-glutamate. The protein operates within amino-acid biosynthesis; L-histidine biosynthesis; L-histidine from 5-phospho-alpha-D-ribose 1-diphosphate: step 7/9. This is Histidinol-phosphate aminotransferase from Haloarcula marismortui (strain ATCC 43049 / DSM 3752 / JCM 8966 / VKM B-1809) (Halobacterium marismortui).